Reading from the N-terminus, the 631-residue chain is Chaperone protein DnaK (631 aa).

Thr-197 carries the post-translational modification Phosphothreonine; by autocatalysis. Residues 599–631 (AQSDAGAAGSASEENTTSNEKVVDADFEDVEKK) are disordered. Over residues 603–612 (AGAAGSASEE) the composition is skewed to low complexity.

Belongs to the heat shock protein 70 family.

Functionally, acts as a chaperone. In Rickettsia bellii (strain RML369-C), this protein is Chaperone protein DnaK.